Here is a 259-residue protein sequence, read N- to C-terminus: Deoxyribose-phosphate aldolase (259 aa).

Catalysis depends on aspartate 102, which acts as the Proton donor/acceptor. Catalysis depends on lysine 167, which acts as the Schiff-base intermediate with acetaldehyde. Lysine 201 acts as the Proton donor/acceptor in catalysis.

It belongs to the DeoC/FbaB aldolase family. DeoC type 2 subfamily.

The protein resides in the cytoplasm. The catalysed reaction is 2-deoxy-D-ribose 5-phosphate = D-glyceraldehyde 3-phosphate + acetaldehyde. Its pathway is carbohydrate degradation; 2-deoxy-D-ribose 1-phosphate degradation; D-glyceraldehyde 3-phosphate and acetaldehyde from 2-deoxy-alpha-D-ribose 1-phosphate: step 2/2. In terms of biological role, catalyzes a reversible aldol reaction between acetaldehyde and D-glyceraldehyde 3-phosphate to generate 2-deoxy-D-ribose 5-phosphate. In Shigella flexneri, this protein is Deoxyribose-phosphate aldolase.